The sequence spans 158 residues: NADH-quinone oxidoreductase subunit B 2 (158 aa).

The [4Fe-4S] cluster site is built by Cys37, Cys38, Cys102, and Cys132.

The protein belongs to the complex I 20 kDa subunit family. As to quaternary structure, NDH-1 is composed of 14 different subunits. Subunits NuoB, C, D, E, F, and G constitute the peripheral sector of the complex. [4Fe-4S] cluster serves as cofactor.

It localises to the cell inner membrane. The catalysed reaction is a quinone + NADH + 5 H(+)(in) = a quinol + NAD(+) + 4 H(+)(out). In terms of biological role, NDH-1 shuttles electrons from NADH, via FMN and iron-sulfur (Fe-S) centers, to quinones in the respiratory chain. Couples the redox reaction to proton translocation (for every two electrons transferred, four hydrogen ions are translocated across the cytoplasmic membrane), and thus conserves the redox energy in a proton gradient. The protein is NADH-quinone oxidoreductase subunit B 2 of Acidithiobacillus ferrooxidans (strain ATCC 53993 / BNL-5-31) (Leptospirillum ferrooxidans (ATCC 53993)).